A 400-amino-acid chain; its full sequence is Acetate kinase (400 aa).

Position 10 (Asn-10) interacts with Mg(2+). Residue Lys-17 coordinates ATP. Residue Arg-91 coordinates substrate. Residue Asp-150 is the Proton donor/acceptor of the active site. ATP-binding positions include 210-214 (HLGNG), 285-287 (DCR), and 333-337 (GIGEN). Position 387 (Glu-387) interacts with Mg(2+).

This sequence belongs to the acetokinase family. In terms of assembly, homodimer. Mg(2+) is required as a cofactor. It depends on Mn(2+) as a cofactor.

The protein resides in the cytoplasm. The enzyme catalyses acetate + ATP = acetyl phosphate + ADP. Its pathway is metabolic intermediate biosynthesis; acetyl-CoA biosynthesis; acetyl-CoA from acetate: step 1/2. In terms of biological role, catalyzes the formation of acetyl phosphate from acetate and ATP. Can also catalyze the reverse reaction. This chain is Acetate kinase, found in Yersinia pseudotuberculosis serotype I (strain IP32953).